Here is a 248-residue protein sequence, read N- to C-terminus: Large ribosomal subunit protein uL30B (248 aa).

Residues 1–45 form a disordered region; it reads MSQKKQKIQVEQKVPENVAKKTQRDSKLRDAVAKRRTERLAANKT. Basic and acidic residues predominate over residues 8 to 41; sequence IQVEQKVPENVAKKTQRDSKLRDAVAKRRTERLA.

It belongs to the universal ribosomal protein uL30 family.

Binds to G-rich structures in 28S rRNA and in mRNAs. Plays a regulatory role in the translation apparatus; inhibits cell-free translation of mRNAs. In Paramecium tetraurelia, this protein is Large ribosomal subunit protein uL30B (Rpl7-2).